Reading from the N-terminus, the 390-residue chain is Tuftelin (390 aa).

Coiled coils occupy residues 88–126 (DKMI…KLDR) and 162–351 (DTHI…IEKQ). Ser171 carries the post-translational modification Phosphoserine.

Belongs to the tuftelin family. In terms of assembly, interacts with TFIP11. As to expression, present in the extracellular enamel and is mainly associated with the crystal component.

Its subcellular location is the secreted. Functionally, involved in the structural organization of the epidermis. Involved in the mineralization and structural organization of enamel. The polypeptide is Tuftelin (TUFT1) (Bos taurus (Bovine)).